A 325-amino-acid chain; its full sequence is D-alanine--D-alanine ligase (325 aa).

The region spanning 109–309 (KRVCKERMLP…FCTLLDQLIE (201 aa)) is the ATP-grasp domain. 136–191 (CRRLPFPMFVKPANLGSSVGISKAHDEQELEAAFSLAKQYDRKIIVERGIEGRELE) lines the ATP pocket. Asp-262, Glu-276, and Asn-278 together coordinate Mg(2+).

Belongs to the D-alanine--D-alanine ligase family. Mg(2+) is required as a cofactor. It depends on Mn(2+) as a cofactor.

It localises to the cytoplasm. It carries out the reaction 2 D-alanine + ATP = D-alanyl-D-alanine + ADP + phosphate + H(+). Its pathway is cell wall biogenesis; peptidoglycan biosynthesis. Its function is as follows. Cell wall formation. The polypeptide is D-alanine--D-alanine ligase (Solibacter usitatus (strain Ellin6076)).